Consider the following 150-residue polypeptide: UPF0178 protein ASA_3749 (150 aa).

The protein belongs to the UPF0178 family.

The polypeptide is UPF0178 protein ASA_3749 (Aeromonas salmonicida (strain A449)).